Consider the following 3010-residue polypeptide: Genome polyprotein (3010 aa).

S2 is modified (N-acetylserine; by host). An interaction with STAT1 region spans residues 2 to 23 (STNPKPQRKTKRNTNRRPQDVK). The interval 2 to 58 (STNPKPQRKTKRNTNRRPQDVKFPGGGQIVGGVYLLPRRGPRLGVRATRKTSERSQP) is interaction with EIF2AK2/PKR. The interval 2–59 (STNPKPQRKTKRNTNRRPQDVKFPGGGQIVGGVYLLPRRGPRLGVRATRKTSERSQPR) is interaction with DDX3X. Residues 2–75 (STNPKPQRKT…PKARQPEGRA (74 aa)) are disordered. Topologically, residues 2-168 (STNPKPQRKT…EDGVNYATGN (167 aa)) are cytoplasmic. 2 consecutive short sequence motifs (nuclear localization signal) follow at residues 5–13 (PKPQRKTKR) and 38–43 (PRRGPR). Over residues 7–16 (PQRKTKRNTN) the composition is skewed to basic residues. A compositionally biased stretch (low complexity) spans 32–47 (GGVYLLPRRGPRLGVR). S53 carries the post-translational modification Phosphoserine; by host. Short sequence motifs (nuclear localization signal) lie at residues 58–64 (PRGRRQP) and 66–71 (PKARQP). Residue S99 is modified to Phosphoserine; by host. Positions 112-152 (PRRRSRNLGKVIDTLTCGFADLMGYIPLVGAPLGGAARALA) are important for endoplasmic reticulum and mitochondrial localization. At S116 the chain carries Phosphoserine; by host PKA. The segment at 122–173 (VIDTLTCGFADLMGYIPLVGAPLGGAARALAHGVRVLEDGVNYATGNLPGCS) is interaction with APOA2. Positions 164 to 167 (YATG) are important for lipid droplets localization. Residues 169–189 (LPGCSFSIFLLALLSCLTIPA) form a helical membrane-spanning segment. The propeptide at 178–191 (LLALLSCLTIPASA) is ER anchor for the core protein, removed in mature form by host signal peptidase. The Lumenal portion of the chain corresponds to 190 to 358 (SAYEVRNVSG…AGAHWGVLAG (169 aa)). N-linked (GlcNAc...) asparagine; by host glycans are attached at residues N196, N209, N234, and N250. Positions 265–296 (LVGAAALCSAMYVGDLCGSVFLVAQLFTFSPR) are important for fusion. N-linked (GlcNAc...) asparagine; by host glycosylation is present at N305. Residues 359 to 379 (LAYYSMVGNWAKVLIVMLLFA) traverse the membrane as a helical segment. Residues 380 to 725 (GVDGGTYVTG…WEYVLLLFLL (346 aa)) are Lumenal-facing. Positions 385–411 (TYVTGGTMAKNTLGITSLFSPGSSQKI) are HVR1. A glycan (N-linked (GlcNAc...) asparagine; by host) is linked at N417. 3 N-linked (GlcNAc...) (high mannose) asparagine; by host glycosylation sites follow: N423, N430, and N448. 4 disulfides stabilise this stretch: C429-C552, C452-C459, C486-C494, and C503-C508. The HVR2 stretch occupies residues 474–482 (YNESHSSDQ). The CD81-binding 1 stretch occupies residues 480–493 (SDQRPYCWHYAPRP). N-linked (GlcNAc...) (high mannose) asparagine; by host glycosylation is present at N532. A CD81-binding 2 region spans residues 544–551 (PPQGNWFG). N556 carries N-linked (GlcNAc...) (high mannose) asparagine; by host glycosylation. C564 and C569 are joined by a disulfide. A glycan (N-linked (GlcNAc...) (high mannose) asparagine; by host) is linked at N576. 3 disulfide bridges follow: C581/C585, C597/C620, and C607/C644. N-linked (GlcNAc...) (high mannose) asparagine; by host glycans are attached at residues N623 and N645. An intrachain disulfide couples C652 to C677. Residues 660–671 (SELSPLLLSTTE) are EIF2AK2/eIF2-alpha phosphorylation homology domain (PePHD). Residues 726-746 (LADARVCACLWMMLLIAQAEA) traverse the membrane as a helical segment. At 747-757 (ALENLVVLNAA) the chain is on the lumenal side. The chain crosses the membrane as a helical span at residues 758 to 778 (SVAGAHGILSFLVFFCAAWYI). The Cytoplasmic portion of the chain corresponds to 779 to 781 (KGR). Residues 782 to 803 (LVPGAAYALYGVWPLLLLLLAL) form a helical membrane-spanning segment. The Lumenal portion of the chain corresponds to 804-813 (PPRAYAMDRE). The chain crosses the membrane as a helical span at residues 814 to 834 (MAASCGGAVFVGLILLTLSPH). The Cytoplasmic portion of the chain corresponds to 835-838 (YKLF). The chain crosses the membrane as a helical span at residues 839–859 (LARLIWWLQYFITRAEAHLQV). The Lumenal segment spans residues 860–881 (WIPPLNVRGGRDAVILLTCAIH). Residues 882 to 902 (PELIFTITKILLAILGPLMVL) form a helical membrane-spanning segment. The 124-residue stretch at 903 to 1026 (QAGITKVPYF…SLEGQGWRLL (124 aa)) folds into the Peptidase C18 domain. The Cytoplasmic portion of the chain corresponds to 903-1657 (QAGITKVPYF…CMSADLEVVT (755 aa)). The interval 904-1206 (AGITKVPYFV…PVESMETTMR (303 aa)) is protease NS2-3. Residue C922 is the site of S-palmitoyl cysteine; by host attachment. An interaction with host SCPS1 region spans residues 929-949 (AGGHYVQMALMKLAALTGTYV). Residues H952, E972, and C993 each act as for protease NS2 activity; shared with dimeric partner in the active site. The 182-residue stretch at 1027–1208 (APITAYSQQT…ESMETTMRSP (182 aa)) folds into the Peptidase S29 domain. Residues H1083 and D1107 each act as charge relay system; for serine protease NS3 activity in the active site. C1123 and C1125 together coordinate Zn(2+). Residue S1165 is the Charge relay system; for serine protease NS3 activity of the active site. Positions 1171 and 1175 each coordinate Zn(2+). The region spanning 1217–1369 (PAVPQTFQVA…PNIEEVALSS (153 aa)) is the Helicase ATP-binding domain. Residue 1230–1237 (APTGSGKS) participates in ATP binding. Residues S1237 and E1317 each coordinate Mg(2+). A DECH box motif is present at residues 1316 to 1319 (DECH). The RNA-binding stretch occupies residues 1486–1497 (QRRGRTGRGRMG). The chain crosses the membrane as a helical span at residues 1658–1678 (STWVLVGGVLAALAAYCLTTG). The segment at 1679–1690 (SVVIVGRIILSG) is NS3-binding. Topologically, residues 1679 to 1805 (SVVIVGRIIL…SITSPLTTQH (127 aa)) are cytoplasmic. A helical membrane pass occupies residues 1806-1826 (TLLFNILGGWVAAQLAPPSAA). The Lumenal portion of the chain corresponds to 1827 to 1828 (SA). The helical transmembrane segment at 1829 to 1849 (FVGAGIAGAAVGSIGLGKVLV) threads the bilayer. The segment at 1833 to 1861 (GIAGAAVGSIGLGKVLVDILAGYGAGVAG) is glycine zipper. D1850 is a topological domain (cytoplasmic). Residues 1851 to 1871 (ILAGYGAGVAGALVAFKVMSG) traverse the membrane as a helical segment. Residues 1872-1881 (EMPSTEDLVN) lie on the Lumenal side of the membrane. Residues 1882-1902 (LLPAILSPGALVVGVVCAAIL) form a helical membrane-spanning segment. At 1903 to 1972 (RRHVGPGEGA…WINEDCSTPC (70 aa)) the chain is on the cytoplasmic side. 2 S-palmitoyl cysteine; by host lipidation sites follow: C1968 and C1972. An intramembrane segment occupies 1973 to 2003 (SGSWLRDVWDWICTVLTDFKTWLQSKLLPRL). Residues 1978 to 1998 (RDVWDWICTVLTDFKTWLQSK) are membrane-binding. Residues 2004-2989 (PGVPFFSCQR…YHSLSRARPR (986 aa)) lie on the Cytoplasmic side of the membrane. Residues 2005-2221 (GVPFFSCQRG…KATCTTRHDS (217 aa)) form an RNA-binding region. Residues C2011, C2029, C2031, and C2052 each contribute to the Zn(2+) site. Positions 2120-2208 (EFFTEVDGVR…ASSSASQLSA (89 aa)) are FKBP8-binding. Positions 2120–2332 (EFFTEVDGVR…PIPPPRRKRT (213 aa)) are transcriptional activation. An interaction with non-structural protein 4A region spans residues 2135-2139 (PACKP). The disordered stretch occupies residues 2187-2219 (KRRLARGSPPSLASSSASQLSAPSLKATCTTRH). The interval 2189 to 2441 (RLARGSPPSL…PCAAEETKLP (253 aa)) is interaction with host SKP2. Position 2194 is a phosphoserine; by host; in p56 (S2194). The segment covering 2194–2211 (SPPSLASSSASQLSAPSL) has biased composition (low complexity). Phosphoserine; by host; in p58 is present on S2197. At S2201 the chain carries Phosphoserine; by host; in p56 and p58, regulates intracellular NS5A distribution. Phosphoserine; by host; in p58 occurs at positions 2204, 2207, and 2210. ISDR stretches follow at residues 2206–2245 (LSAP…TRVE) and 2210–2249 (SLKA…SENK). Residues 2210–2275 (SLKATCTTRH…REVSVPAEIL (66 aa)) are EIF2AK2/PKR-binding. The tract at residues 2249–2306 (KVVILDSFEPLQAEEDEREVSVPAEILRRSRKFPRAMPIWARPDYNPPLLESWKDPDY) is NS4B-binding. Residues 2322–2325 (PPIP) carry the SH3-binding motif. The Nuclear localization signal signature appears at 2326-2334 (PPRRKRTVV). The interaction with host IFI27 stretch occupies residues 2332–2441 (TVVLSESTVS…PCAAEETKLP (110 aa)). K2350 participates in a covalent cross-link: Glycyl lysine isopeptide (Lys-Gly) (interchain with G-Cter in ubiquitin). Positions 2351 to 2371 (TFGSSESSAVDSGTATASPDQ) are enriched in polar residues. A disordered region spans residues 2351-2407 (TFGSSESSAVDSGTATASPDQPSDDGDAGSDVESYSSMPPLEGEPGDPDLSDGSWST). The segment at 2354–2377 (SSESSAVDSGTATASPDQPSDDGD) is V3. S2448 and S2461 each carry phosphoserine; by host. Residues 2633 to 2751 (PMGFAYDTRC…ICESAGTQED (119 aa)) form the RdRp catalytic domain. The Mg(2+) site is built by D2639, D2737, and D2738. The chain crosses the membrane as a helical span at residues 2990–3010 (WFMWCLLLLSVGVGIYLLPNR).

The protein belongs to the hepacivirus polyprotein family. As to quaternary structure, homooligomer. Interacts with E1 (via C-terminus). Interacts with the non-structural protein 5A. Interacts (via N-terminus) with host STAT1 (via SH2 domain); this interaction results in decreased STAT1 phosphorylation and ubiquitin-mediated proteasome-dependent STAT1 degradation, leading to decreased IFN-stimulated gene transcription. Interacts with host STAT3; this interaction constitutively activates STAT3. Interacts with host LTBR receptor. Interacts with host TNFRSF1A receptor and possibly induces apoptosis. Interacts with host HNRPK. Interacts with host YWHAE. Interacts with host UBE3A/E6AP. Interacts with host DDX3X. Interacts with host APOA2. Interacts with host RXRA protein. Interacts with host SP110 isoform 3/Sp110b; this interaction sequesters the transcriptional corepressor SP110 away from the nucleus. Interacts with host CREB3 nuclear transcription protein; this interaction triggers cell transformation. Interacts with host ACY3. Interacts with host C1QR1. Interacts with host RBM24; this interaction, which enhances the interaction of the mature core protein with 5'-UTR, may inhibit viral translation and favor replication. Interacts with host EIF2AK2/PKR; this interaction induces the autophosphorylation of EIF2AK2. Part of the viral assembly initiation complex composed of NS2, E1, E2, NS3, NS4A, NS5A and the mature core protein. In terms of assembly, forms a heterodimer with envelope glycoprotein E2. Interacts with mature core protein. Interacts with protease NS2. The heterodimer E1/E2 interacts with host CLDN1; this interaction plays a role in viral entry into host cell. Interacts with host SPSB2 (via C-terminus). Part of the viral assembly initiation complex composed of NS2, E1, E2, NS3, NS4A, NS5A and the mature core protein. Interacts with human PLSCR1. Interacts with host NEURL3; this interaction prevents E1 binding to glycoprotein E2. Forms a heterodimer with envelope glycoprotein E1. Interacts with host CD81 and SCARB1 receptors; these interactions play a role in viral entry into host cell. Interacts with host EIF2AK2/PKR; this interaction inhibits EIF2AK2 and probably allows the virus to evade the innate immune response. Interacts with host CD209/DC-SIGN and CLEC4M/DC-SIGNR. Interact with host SPCS1; this interaction is essential for viral particle assembly. Interacts with protease NS2. The heterodimer E1/E2 interacts with host CLDN1; this interaction plays a role in viral entry into host cell. Part of the viral assembly initiation complex composed of NS2, E1, E2, NS3, NS4A, NS5A and the mature core protein. Interacts with host SLC3A2/4F2hc; the interaction may facilitate viral entry into host cell. Interacts with human PLSCR1. As to quaternary structure, homohexamer. Homoheptamer. Interacts with protease NS2. In terms of assembly, homodimer. Interacts with host SPCS1; this interaction is essential for viral particle assembly. Interacts with envelope glycoprotein E1. Interacts with envelope glycoprotein E2. Interacts with viroporin p7. Interacts with serine protease/helicase NS3. Part of the replication complex composed of NS2, NS3, NS4A, NS4B, NS5A and the RNA-directed RNA polymerase embedded in an ER-derived membranous web. Part of the viral assembly initiation complex composed of NS2, E1, E2, NS3, NS4A, NS5A and the mature core protein. Interacts with protease NS2. Interacts with non-structural protein 4A; this interaction stabilizes the folding of NS3 serine protease. NS3-NS4A interaction is essential for NS3 activation and allows membrane anchorage of the latter. NS3/NS4A complex also prevents phosphorylation of host IRF3, thus preventing the establishment of dsRNA induced antiviral state. Interacts with host MAVS; this interaction leads to the cleavage and inhibition of host MAVS. Interacts with host TICAM1; this interaction leads to the cleavage and inhibition of host TICAM1. Interacts with host TANK-binding kinase/TBK1; this interaction results in the inhibition of the association between TBK1 and IRF3, which leads to the inhibition of IRF3 activation. Interacts with host RBM24. Part of the replication complex composed of NS2, NS3, NS4A, NS4B, NS5A and the RNA-directed RNA polymerase embedded in an ER-derived membranous web. Part of the viral assembly initiation complex composed of NS2, E1, E2, NS3, NS4A, NS5A and the mature core protein. As to quaternary structure, monomer. Homodimer; dimerization is required for RNA-binding. Interacts with the mature core protein. Interacts with host GRB2. Interacts with host BIN1. Interacts with host PIK3R1. Interacts with host SRCAP. Interacts with host FKBP8. Interacts with host VAPB. Interacts with host EIF2AK2/PKR; this interaction leads to disruption of EIF2AK2 dimerization by NS5A and probably allows the virus to evade the innate immune response. Interacts (via N-terminus) with host PACSIN2 (via N-terminus); this interaction attenuates protein kinase C alpha-mediated phosphorylation of PACSIN2 by disrupting the interaction between PACSIN2 and PRKCA. Interacts (via N-terminus) with host SRC kinase (via SH2 domain). Interacts with most Src-family kinases. Interacts with host IFI27 and SKP2; promotes the ubiquitin-mediated proteasomal degradation of NS5A. Interacts (via N-terminus) with non-structural protein 4A. Interacts with non-structural protein 4B. Interacts with RNA-directed RNA polymerase. Part of the replication complex composed of NS2, NS3, NS4A, NS4B, NS5A and the RNA-directed RNA polymerase embedded in an ER-derived membranous web. Interacts with host GPS2. Interacts with host TNFRSF21; this interaction allows the modulation by the virus of JNK, p38 MAPK, STAT3, and Akt signaling pathways in a DR6-dependent manner. Interacts (via N-terminus) with host CIDEB (via N-terminus); this interaction seems to regulate the association of HCV particles with APOE. Interacts with host CHKA/Choline Kinase-alpha; CHKA bridges host PI4KA and NS5A and potentiates NS5A-stimulated PI4KA activity, which then facilitates the targeting of the ternary complex to the ER for viral replication. Interacts with host SPSB2 (via C-terminus); this interaction targets NS5A for ubiquitination and degradation. Part of the viral assembly initiation complex composed of NS2, E1, E2, NS3, NS4A, NS5A and the mature core protein. Requires Zn(2+) as cofactor. It depends on Mg(2+) as a cofactor. Specific enzymatic cleavages in vivo yield mature proteins. The structural proteins, core, E1, E2 and p7 are produced by proteolytic processing by host signal peptidases. The core protein precursor is synthesized as a 23 kDa, which is retained in the ER membrane through the hydrophobic signal peptide. Cleavage by the signal peptidase releases the 21 kDa mature core protein. The cleavage of the core protein precursor occurs between aminoacids 176 and 188 but the exact cleavage site is not known. Some degraded forms of the core protein appear as well during the course of infection. The other proteins (p7, NS2, NS3, NS4A, NS4B, NS5A and NS5B) are cleaved by the viral proteases. Autoprocessing between NS2 and NS3 is mediated by the NS2 cysteine protease catalytic domain and regulated by the NS3 N-terminal domain. In terms of processing, phosphorylated by host PKC and PKA. Post-translationally, ubiquitinated; mediated by UBE3A and leading to core protein subsequent proteasomal degradation. Highly N-glycosylated. In terms of processing, palmitoylation is required for NS2/3 autoprocessing and E2 recruitment to membranes. Post-translationally, palmitoylated. This modification may play a role in its polymerization or in protein-protein interactions. Cleaved by host caspases which are probably activated by the viral infection. In terms of processing, ubiquitinated. Ubiquitination, most probably at Lys-2350, mediated by host IFI27 and SKP2 leads to proteasomal degradation, restricting viral infection. Ubiquitination by host TRIM22 leads to interruption of viral replication. Post-translationally, phosphorylated on serines in a basal form termed p56. p58 is a hyperphosphorylated form of p56. p56 and p58 coexist in the cell in roughly equivalent amounts. Hyperphosphorylation is dependent on the presence of NS4A. Host CSNK1A1/CKI-alpha or RPS6KB1 kinases may be responsible for NS5A phosphorylation. Tyrosine phosphorylation is essential for the interaction with host SRC. In terms of processing, the N-terminus is phosphorylated by host PRK2/PKN2.

The protein localises to the host endoplasmic reticulum membrane. Its subcellular location is the host mitochondrion membrane. It is found in the virion. The protein resides in the host cytoplasm. It localises to the host nucleus. The protein localises to the host lipid droplet. Its subcellular location is the virion membrane. It is found in the host mitochondrion. The protein resides in the host cell membrane. It localises to the host perinuclear region. The catalysed reaction is Hydrolysis of four peptide bonds in the viral precursor polyprotein, commonly with Asp or Glu in the P6 position, Cys or Thr in P1 and Ser or Ala in P1'.. It catalyses the reaction a ribonucleoside 5'-triphosphate + H2O = a ribonucleoside 5'-diphosphate + phosphate + H(+). It carries out the reaction ATP + H2O = ADP + phosphate + H(+). The enzyme catalyses RNA(n) + a ribonucleoside 5'-triphosphate = RNA(n+1) + diphosphate. Inhibited by the antiviral drug hexamethylene amiloride. Inhibition by amantadine appears to be genotype-dependent. Also inhibited by long-alkyl-chain iminosugar derivatives. Its activity is regulated as follows. Activity is up-regulated by PRK2/PKN2-mediated phosphorylation. Its function is as follows. Packages viral RNA to form a viral nucleocapsid, and promotes virion budding. Participates in the viral particle production as a result of its interaction with the non-structural protein 5A. Binds RNA and may function as a RNA chaperone to induce the RNA structural rearrangements taking place during virus replication. Modulates viral translation initiation by interacting with viral IRES and 40S ribosomal subunit. Affects various cell signaling pathways, host immunity and lipid metabolism. Prevents the establishment of cellular antiviral state by blocking the interferon-alpha/beta (IFN-alpha/beta) and IFN-gamma signaling pathways and by blocking the formation of phosphorylated STAT1 and promoting ubiquitin-mediated proteasome-dependent degradation of STAT1. Activates STAT3 leading to cellular transformation. Regulates the activity of cellular genes, including c-myc and c-fos. May repress the promoter of p53, and sequester CREB3 and SP110 isoform 3/Sp110b in the cytoplasm. Represses cell cycle negative regulating factor CDKN1A, thereby interrupting an important check point of normal cell cycle regulation. Targets transcription factors involved in the regulation of inflammatory responses and in the immune response: suppresses NF-kappa-B activation, and activates AP-1. Binds to dendritic cells (DCs) via C1QR1, resulting in down-regulation of T-lymphocytes proliferation. Alters lipid metabolism by interacting with hepatocellular proteins involved in lipid accumulation and storage. Induces up-regulation of FAS promoter activity, and thereby contributes to the increased triglyceride accumulation in hepatocytes (steatosis). In terms of biological role, forms a heterodimer with envelope glycoprotein E2, which mediates virus attachment to the host cell, virion internalization through clathrin-dependent endocytosis and fusion with host membrane. Fusion with the host cell is most likely mediated by both E1 and E2, through conformational rearrangements of the heterodimer required for fusion rather than a classical class II fusion mechanism. E1/E2 heterodimer binds host apolipoproteins such as APOB and APOE thereby forming a lipo-viro-particle (LVP). APOE associated to the LVP allows the initial virus attachment to cell surface receptors such as the heparan sulfate proteoglycans (HSPGs), syndecan-1 (SDC1), syndecan-1 (SDC2), the low-density lipoprotein receptor (LDLR) and scavenger receptor class B type I (SCARB1). The cholesterol transfer activity of SCARB1 allows E2 exposure and binding of E2 to SCARB1 and the tetraspanin CD81. E1/E2 heterodimer binding on CD81 activates the epithelial growth factor receptor (EGFR) signaling pathway. Diffusion of the complex E1-E2-EGFR-SCARB1-CD81 to the cell lateral membrane allows further interaction with Claudin 1 (CLDN1) and occludin (OCLN) to finally trigger HCV entry. Functionally, forms a heterodimer with envelope glycoprotein E1, which mediates virus attachment to the host cell, virion internalization through clathrin-dependent endocytosis and fusion with host membrane. Fusion with the host cell is most likely mediated by both E1 and E2, through conformational rearrangements of the heterodimer required for fusion rather than a classical class II fusion mechanism. The interaction between envelope glycoprotein E2 and host apolipoprotein E/APOE allows the proper assembly, maturation and infectivity of the viral particles. This interaction is probably promoted via the up-regulation of cellular autophagy by the virus. E1/E2 heterodimer binds host apolipoproteins such as APOB and APOE thereby forming a lipo-viro-particle (LVP). APOE associated to the LVP allows the initial virus attachment to cell surface receptors such as the heparan sulfate proteoglycans (HSPGs), syndecan-1 (SDC1), syndecan-1 (SDC2), the low-density lipoprotein receptor (LDLR) and scavenger receptor class B type I (SCARB1). The cholesterol transfer activity of SCARB1 allows E2 exposure and binding of E2 to SCARB1 and the tetraspanin CD81. E1/E2 heterodimer binding on CD81 activates the epithelial growth factor receptor (EGFR) signaling pathway. Diffusion of the complex E1-E2-EGFR-SCARB1-CD81 to the cell lateral membrane allows further interaction with Claudin 1 (CLDN1) and occludin (OCLN) to finally trigger HCV entry. Inhibits host EIF2AK2/PKR activation, preventing the establishment of an antiviral state. Viral ligand for CD209/DC-SIGN and CLEC4M/DC-SIGNR, which are respectively found on dendritic cells (DCs), and on liver sinusoidal endothelial cells and macrophage-like cells of lymph node sinuses. These interactions allow the capture of circulating HCV particles by these cells and subsequent facilitated transmission to permissive cells such as hepatocytes and lymphocyte subpopulations. The interaction between E2 and host amino acid transporter complex formed by SLC3A2 and SLC7A5/LAT1 may facilitate viral entry into host cell. Ion channel protein that acts as a viroporin and plays an essential role in the assembly, envelopment and secretion of viral particles. Regulates the host cell secretory pathway, which induces the intracellular retention of viral glycoproteins and favors assembly of viral particles. Creates a pore in acidic organelles and releases Ca(2+) and H(+) in the cytoplasm of infected cells, leading to a productive viral infection. High levels of cytoplasmic Ca(2+) may trigger membrane trafficking and transport of viral ER-associated proteins to viroplasms, sites of viral genome replication. This ionic imbalance induces the assembly of the inflammasome complex, which triggers the maturation of pro-IL-1beta into IL-1beta through the action of caspase-1. Targets also host mitochondria and induces mitochondrial depolarization. In addition of its role as a viroporin, acts as a lipid raft adhesion factor. Its function is as follows. Cysteine protease required for the proteolytic auto-cleavage between the non-structural proteins NS2 and NS3. The N-terminus of NS3 is required for the function of NS2 protease (active region NS2-3). Promotes the initiation of viral particle assembly by mediating the interaction between structural and non-structural proteins. In terms of biological role, displays three enzymatic activities: serine protease with a chymotrypsin-like fold, NTPase and RNA helicase. NS3 serine protease, in association with NS4A, is responsible for the cleavages of NS3-NS4A, NS4A-NS4B, NS4B-NS5A and NS5A-NS5B. The NS3/NS4A complex prevents phosphorylation of host IRF3, thus preventing the establishment of dsRNA induced antiviral state. The NS3/NS4A complex induces host amino acid transporter component SLC3A2, thus contributing to HCV propagation. NS3 RNA helicase binds to RNA and unwinds both dsDNA and dsRNA in the 3' to 5' direction, and likely resolves RNA complicated stable secondary structures in the template strand. Binds a single ATP and catalyzes the unzipping of a single base pair of dsRNA. Inhibits host antiviral proteins TBK1 and IRF3 thereby preventing the establishment of an antiviral state. Cleaves host MAVS/CARDIF thereby preventing the establishment of an antiviral state. Cleaves host TICAM1/TRIF, thereby disrupting TLR3 signaling and preventing the establishment of an antiviral state. Functionally, peptide cofactor which forms a non-covalent complex with the N-terminal of NS3 serine protease. The NS3/NS4A complex prevents phosphorylation of host IRF3, thus preventing the establishment of dsRNA induced antiviral state. The NS3/NS4A complex induces host amino acid transporter component SLC3A2, thus contributing to HCV propagation. Induces a specific membrane alteration that serves as a scaffold for the virus replication complex. This membrane alteration gives rise to the so-called ER-derived membranous web that contains the replication complex. NS4B self-interaction contributes to its function in membranous web formation. Promotes host TRIF protein degradation in a CASP8-dependent manner thereby inhibiting host TLR3-mediated interferon signaling. Disrupts the interaction between STING and TBK1 contributing to the inhibition of interferon signaling. Its function is as follows. Phosphorylated protein that is indispensable for viral replication and assembly. Both hypo- and hyperphosphorylated states are required for the viral life cycle. The hyperphosphorylated form of NS5A is an inhibitor of viral replication. Involved in RNA-binding and especially in binding to the viral genome. Zinc is essential for RNA-binding. Participates in the viral particle production as a result of its interaction with the viral mature core protein. Its interaction with host VAPB may target the viral replication complex to vesicles. Down-regulates viral IRES translation initiation. Mediates interferon resistance, presumably by interacting with and inhibiting host EIF2AK2/PKR. Prevents BIN1-induced apoptosis. Acts as a transcriptional activator of some host genes important for viral replication when localized in the nucleus. Via the interaction with host PACSIN2, modulates lipid droplet formation in order to promote virion assembly. Modulates TNFRSF21/DR6 signaling pathway for viral propagation. In terms of biological role, RNA-dependent RNA polymerase that performs primer-template recognition and RNA synthesis during viral replication. Initiates RNA transcription/replication at a flavin adenine dinucleotide (FAD), resulting in a 5'- FAD cap on viral RNAs. In this way, recognition of viral 5' RNA by host pattern recognition receptors can be bypassed, thereby evading activation of antiviral pathways. This is Genome polyprotein from Hepatitis C virus genotype 1b (isolate Con1) (HCV).